Consider the following 373-residue polypeptide: L-threonine 3-dehydrogenase, mitochondrial (373 aa).

Residues 62-67 (GGLGQL), 88-90 (DIR), 106-107 (DI), Tyr-195, Lys-199, and Ile-225 each bind NAD(+). Tyr-195 serves as the catalytic Proton donor/acceptor.

This sequence belongs to the NAD(P)-dependent epimerase/dehydratase family. Homodimer.

It localises to the mitochondrion. The enzyme catalyses L-threonine + NAD(+) = (2S)-2-amino-3-oxobutanoate + NADH + H(+). Its pathway is amino-acid degradation; L-threonine degradation via oxydo-reductase pathway; glycine from L-threonine: step 1/2. Its function is as follows. Catalyzes the NAD(+)-dependent oxidation of L-threonine to 2-amino-3-ketobutyrate, mediating L-threonine catabolism. The sequence is that of L-threonine 3-dehydrogenase, mitochondrial from Sus scrofa (Pig).